Consider the following 186-residue polypeptide: MDDYTQSINDAVKCLRQGGVIAYPTEAVYGLGCDPFNHDAVAQLLTIKKRSIKKGFILIASEWKQVEPLTEPIDPKALARVFDTWPGPFTWTFPASKEAPHWITGQHSTIAIRVTAHPLAKLLCQRFAGPLISSSANQEGEPPIRDVKILRLVFGNKIDKTLEGPLGPTHRPTPIRDAITGEILRL.

The 182-residue stretch at 5–186 folds into the YrdC-like domain; that stretch reads TQSINDAVKC…DAITGEILRL (182 aa).

This sequence belongs to the SUA5 family. TsaC subfamily.

The protein localises to the cytoplasm. It carries out the reaction L-threonine + hydrogencarbonate + ATP = L-threonylcarbamoyladenylate + diphosphate + H2O. Functionally, required for the formation of a threonylcarbamoyl group on adenosine at position 37 (t(6)A37) in tRNAs that read codons beginning with adenine. Catalyzes the conversion of L-threonine, HCO(3)(-)/CO(2) and ATP to give threonylcarbamoyl-AMP (TC-AMP) as the acyladenylate intermediate, with the release of diphosphate. This is Threonylcarbamoyl-AMP synthase from Coxiella burnetii (strain RSA 331 / Henzerling II).